The following is a 91-amino-acid chain: Small ribosomal subunit protein bS18 (91 aa).

This sequence belongs to the bacterial ribosomal protein bS18 family. Part of the 30S ribosomal subunit. Forms a tight heterodimer with protein bS6.

Functionally, binds as a heterodimer with protein bS6 to the central domain of the 16S rRNA, where it helps stabilize the platform of the 30S subunit. The chain is Small ribosomal subunit protein bS18 from Burkholderia multivorans (strain ATCC 17616 / 249).